The following is an 89-amino-acid chain: Small ribosomal subunit protein uS14A (89 aa).

This sequence belongs to the universal ribosomal protein uS14 family. In terms of assembly, part of the 30S ribosomal subunit. Contacts proteins S3 and S10.

Binds 16S rRNA, required for the assembly of 30S particles and may also be responsible for determining the conformation of the 16S rRNA at the A site. This Listeria welshimeri serovar 6b (strain ATCC 35897 / DSM 20650 / CCUG 15529 / CIP 8149 / NCTC 11857 / SLCC 5334 / V8) protein is Small ribosomal subunit protein uS14A.